A 205-amino-acid polypeptide reads, in one-letter code: Nitrophorin-7 (205 aa).

The N-terminal stretch at 1–20 (MELYTALLAVTILSPSSIVG) is a signal peptide. 2 disulfide bridges follow: cysteine 25-cysteine 144 and cysteine 62-cysteine 193. Aspartate 52 provides a ligand contact to histamine. Histidine 80 and asparagine 91 together coordinate heme. Position 154 (aspartate 154) interacts with histamine.

Belongs to the calycin superfamily. Nitrophorin family. In terms of assembly, forms oligomers (at pH 5.5). Heme b serves as cofactor. As to expression, expressed in the endothelial cells of the salivary glands.

It is found in the secreted. It carries out the reaction 3 nitrite + 2 H(+) = 2 nitric oxide + nitrate + H2O. Converts nitrite as the sole substrate to form nitric oxide gas (NO). NO(2-) serves both as an electron donor and as an electron acceptor. Binds to negatively charged cell surfaces of activated platelets; binds to L-a-phosphatidyl-L-serine (PS)-bearing phospholipid membranes. Once bound on an activated platelet, NP7 releases its stored nitric oxide gas (NO) into the victim's tissues while feeding, resulting in vasodilation and inhibition of platelet aggregation. Also acts as an anticoagulant by blocking coagulation-factor binding sites. Has antihistamine activity; binds histamine with high affinity. The sequence is that of Nitrophorin-7 from Rhodnius prolixus (Triatomid bug).